The primary structure comprises 757 residues: RNA-directed RNA polymerase catalytic subunit (757 aa).

Residues 50–82 (SEKGKWTTNTETGAPQLNPIDGPLPEDNEPSGY) form a disordered region. Polar residues predominate over residues 55-64 (WTTNTETGAP). 2 consecutive short sequence motifs (nuclear localization signal) follow at residues 187-195 (RKRRVRDNM) and 203-216 (RTIGKKKQRVNKRS). The segment at 249-256 (RGFVYFVE) is promoter-binding site. A RdRp catalytic domain is found at 286–483 (VRKMMTNSQD…GINMSKKKSY (198 aa)).

This sequence belongs to the influenza viruses polymerase PB1 family. Influenza RNA polymerase is composed of three subunits: PB1, PB2 and PA. Interacts (via N-terminus) with PA (via C-terminus). Interacts (via C-terminus) with PB2 (via N-terminus); this interaction is essential for transcription initiation. Post-translationally, phosphorylated by host PRKCA.

It localises to the host nucleus. The protein resides in the host cytoplasm. The catalysed reaction is RNA(n) + a ribonucleoside 5'-triphosphate = RNA(n+1) + diphosphate. RNA-dependent RNA polymerase which is responsible for replication and transcription of virus RNA segments. The transcription of viral mRNAs occurs by a unique mechanism called cap-snatching. 5' methylated caps of cellular mRNAs are cleaved after 10-13 nucleotides by PA. In turn, these short capped RNAs are used as primers by PB1 for transcription of viral mRNAs. During virus replication, PB1 initiates RNA synthesis and copy vRNA into complementary RNA (cRNA) which in turn serves as a template for the production of more vRNAs. In Aves (whales), this protein is RNA-directed RNA polymerase catalytic subunit.